A 145-amino-acid polypeptide reads, in one-letter code: Large ribosomal subunit protein uL13 (145 aa).

It belongs to the universal ribosomal protein uL13 family. In terms of assembly, part of the 50S ribosomal subunit.

This protein is one of the early assembly proteins of the 50S ribosomal subunit, although it is not seen to bind rRNA by itself. It is important during the early stages of 50S assembly. The protein is Large ribosomal subunit protein uL13 of Bacillus cereus (strain ZK / E33L).